Here is a 1396-residue protein sequence, read N- to C-terminus: MASKAKNTAAAAKAEGTAKRRIRKIFGDIHEVVKMPNLIEVQRESYEQFLRSNKEIDYVSGLEKTLRSVFPIRDFAGTAELDFVHYELEPPKYDTTECRQRGITYAAPMKVTLRLIVFEVDQETETRSVLDIKEQDVYMGDMPLMTGNGTFIINGTERVIVSQMHRSPGVLFDHDRGKTHSSGKLLFAARVIPYRGSWLDFEFDAKDIVNVRIDRKRKLPVTALLYALGLDSEEILHFFYNTVTWKRAGGKKGEGWKIPFEPEAWRGQKPTFALVDAKTGEEVFPANQKISPRAANKAQKDGLKDLLLPTEEVFARYAAKDMIDEKTGRIYIEAGDEVGPDHLEALDAAGIDELELLDIDEINTGPWIRNTLKVDKAENRDEGLEAIYKVMRPGEPPTKETAEALFEGLFFDGERYDLSAVGRVKLNMRLDLDAEDTVTTLRKEDILAVVKELVGLKDGKGDVDDIDNLGNRRVRSVGELLENQYRVGLLRMERAVKERMSSVDVSTVMPNDLINAKPAVAAVREFFGSSQLSQFMDQTNPLSEVTHKRRVSALGPGGLTRERAGFEVRDVHPTHYGRICPIETPEGPNIGLINSLSTFARVNKYGFIETPYRVVKDGKVTSEVIYLSAMEEQKHTVAQASAELTEDGTFVEELISARQNGDNLMAPSETVTLMDVSPKQLVSVAASLIPFLENDDANRALMGSNMQRQAVPLVKAEAPWVGTGMEETVARDSGAAITATRGGIVDQVDATRIVIRAIGDVEPGQSGVDIYTLQKFQRSNQNTCINQRPLVKVGETVEAGDVIADGPSTDLGELALGKNTLVAFMPWNGYNYEDSILISERIVKDDVFTSIHIEEFEVMARDTKLGPEDITRDIPNVGEEALRNLDEAGIVYIGAEVHPGDILCGKITPKGESPMTPEEKLLRAIFGEKASDVRDTSLRLPPGVAGTVVEVRVFNRHGIEVDDRTRAIQQEEIERLRKDSQDERTILNRATYNRLRDMLLGQTASAAPKGVKKGVKIDEALLEGIDRHEWFKFAVADDNRQQQIEAVKSQYDEAAKGIDDKFEDRKEKLERGDELAPGVLKMVKVFVAVKRKLQPGDKMAGRHGNKGVISRILPVEDMPFLEDGTPVDIVLNPLGVPSRMNVGQIFETHLGFAARGLGQQVKNALEDWRAANPDPEAGKPPEAVKETLQRVYGDRYEDDIAGRSNAEIIELASNLTAGVPMGTPVFDGAREGDVTTQLEAAGIDSSGQSVLYDGRTGEAFDRKVTVGIIYMLKLHHLVDDKIHARSIGPYSLVTQQPLGGKAQFGGQRFGEMEVWALQAYGAAYTLQEMLTVKSDDVVGRTKVYEAIVKGDDTFEAGIPESFNVLVKEMRSLGLNVELSSLTDGDEDDDGLQIAAE.

The protein belongs to the RNA polymerase beta chain family. As to quaternary structure, the RNAP catalytic core consists of 2 alpha, 1 beta, 1 beta' and 1 omega subunit. When a sigma factor is associated with the core the holoenzyme is formed, which can initiate transcription.

It catalyses the reaction RNA(n) + a ribonucleoside 5'-triphosphate = RNA(n+1) + diphosphate. Its function is as follows. DNA-dependent RNA polymerase catalyzes the transcription of DNA into RNA using the four ribonucleoside triphosphates as substrates. This is DNA-directed RNA polymerase subunit beta from Erythrobacter litoralis (strain HTCC2594).